The sequence spans 577 residues: Leucine-rich repeat protein soc-2 homolog (577 aa).

Composition is skewed to basic and acidic residues over residues 1-10 (MRRTKGRTDS) and 33-48 (STAH…EAKK). Residues 1 to 71 (MRRTKGRTDS…PTVKKRSTPS (71 aa)) form a disordered region. LRR repeat units lie at residues 87–109 (GATR…KELT), 110–131 (SLRE…VGLL), 133–155 (NLET…VKLT), 156–177 (KLKV…IYKL), 179–201 (TLTT…GNLK), 202–223 (LLER…IGQL), 225–246 (HLVT…IGNC), 248–269 (HMTS…IGRL), 271–292 (AMTR…LANC), 294–315 (GIDE…LLSS), 318–339 (NLTS…PPKQ), 342–363 (QVNT…VFNK), 366–387 (YLSK…FGSW), 389–410 (SLVE…IQWL), 412–434 (NLEV…GALR), 435–456 (KLRV…IEYL), 458–479 (SLER…IGYL), 481–502 (SVTY…IGNM), 504–526 (SLEQ…LVLC), and 528–549 (SLQI…IVAG).

Belongs to the SHOC2 family.

Its function is as follows. Acts as a Ras effector and participates in MAPK pathway activation. Probably acts as a scaffolding protein in a protein phosphatase complex that specifically dephosphorylates Raf kinase and stimulate Raf activity at specialized signaling complexes upon Ras activation. In Nematostella vectensis (Starlet sea anemone), this protein is Leucine-rich repeat protein soc-2 homolog.